A 142-amino-acid chain; its full sequence is MELRAFCVILLITFLAVSSQAAKNKKEKGKKGASDCTEWTWGRCIPNSKDCGAGTREGTCKEETRKLKCKIPCNWKKAFGADCKYKFENWGECNATTGQKVRSGTLKKALYNADCQQTVEATKPCSLKTKSKSKGKKGKGKE.

An N-terminal signal peptide occupies residues 1–21 (MELRAFCVILLITFLAVSSQA). Disulfide bonds link Cys36/Cys60, Cys44/Cys69, Cys51/Cys73, Cys83/Cys115, and Cys93/Cys125.

This sequence belongs to the pleiotrophin family.

The protein localises to the secreted. In terms of biological role, secreted protein that functions as a cytokine and growth factor and mediates its signal through cell-surface proteoglycan and non-proteoglycan receptors. Binds cell-surface proteoglycan receptors via their chondroitin sulfate (CS) groups. Thereby regulates many processes like inflammatory response, cell proliferation, cell adhesion, cell growth, cell survival, tissue regeneration, cell differentiation and cell migration. Inhibits mesoderm formation and promotes neural formation during development. Plays a role in development of the neuromuscular junction (NMJ). Has antibacterial activity against both Gram-positive and Gram-negative bacteria. This chain is Midkine, found in Xenopus tropicalis (Western clawed frog).